A 346-amino-acid polypeptide reads, in one-letter code: UDP-3-O-acylglucosamine N-acyltransferase (346 aa).

His-240 serves as the catalytic Proton acceptor.

It belongs to the transferase hexapeptide repeat family. LpxD subfamily. Homotrimer.

The catalysed reaction is a UDP-3-O-[(3R)-3-hydroxyacyl]-alpha-D-glucosamine + a (3R)-hydroxyacyl-[ACP] = a UDP-2-N,3-O-bis[(3R)-3-hydroxyacyl]-alpha-D-glucosamine + holo-[ACP] + H(+). The protein operates within bacterial outer membrane biogenesis; LPS lipid A biosynthesis. Catalyzes the N-acylation of UDP-3-O-acylglucosamine using 3-hydroxyacyl-ACP as the acyl donor. Is involved in the biosynthesis of lipid A, a phosphorylated glycolipid that anchors the lipopolysaccharide to the outer membrane of the cell. This chain is UDP-3-O-acylglucosamine N-acyltransferase, found in Phocaeicola vulgatus (strain ATCC 8482 / DSM 1447 / JCM 5826 / CCUG 4940 / NBRC 14291 / NCTC 11154) (Bacteroides vulgatus).